The sequence spans 552 residues: MFS-type transporter atr4 (552 aa).

The interval 1-102 is disordered; sequence MEDPKSLSAP…NIVDWDGPND (102 aa). A compositionally biased stretch (low complexity) spans 16-27; the sequence is ADTTTADETPAA. Composition is skewed to polar residues over residues 38–47 and 71–80; these read KAGSESSENT and LRNSSVSRSN. Residue asparagine 73 is glycosylated (N-linked (GlcNAc...) asparagine). A run of 6 helical transmembrane segments spans residues 118-138, 153-173, 182-202, 214-234, 244-264, and 272-292; these read IFLV…LATG, LGSL…LVIA, MPLY…CALG, LQGC…SDLI, GIYA…GGFL, and WLMW…FVVM. Asparagine 314 carries an N-linked (GlcNAc...) asparagine glycan. The next 6 helical transmembrane spans lie at 346-366, 385-405, 425-445, 452-472, 498-518, and 521-541; these read PIIF…YLLF, GLVY…FGVF, LLPM…YGWS, WIVP…TLVC, VVGA…GIGW, and SLLA…YVYG.

Belongs to the major facilitator superfamily.

The protein resides in the cell membrane. Its function is as follows. MFS-type transporter; part of the gene cluster that mediates the biosynthesis of atranorin, a depside of polyketide origin that accumulates in the cortical or medullary layers of lichen thalli. This chain is MFS-type transporter atr4, found in Stereocaulon alpinum (Alpine snow lichen).